The following is a 685-amino-acid chain: DNA ligase (685 aa).

NAD(+)-binding positions include D47–D51, S96–L97, and E125. Residue K127 is the N6-AMP-lysine intermediate of the active site. The NAD(+) site is built by R148, E185, K304, and K328. Zn(2+)-binding residues include C422, C425, C440, and C446. The BRCT domain maps to A605–A685.

It belongs to the NAD-dependent DNA ligase family. LigA subfamily. It depends on Mg(2+) as a cofactor. Requires Mn(2+) as cofactor.

It catalyses the reaction NAD(+) + (deoxyribonucleotide)n-3'-hydroxyl + 5'-phospho-(deoxyribonucleotide)m = (deoxyribonucleotide)n+m + AMP + beta-nicotinamide D-nucleotide.. Functionally, DNA ligase that catalyzes the formation of phosphodiester linkages between 5'-phosphoryl and 3'-hydroxyl groups in double-stranded DNA using NAD as a coenzyme and as the energy source for the reaction. It is essential for DNA replication and repair of damaged DNA. This chain is DNA ligase, found in Shewanella baltica (strain OS195).